A 385-amino-acid chain; its full sequence is Carbamoyl phosphate synthase small chain (385 aa).

Residues Met1–Phe196 form a CPSase region. Residues Ser51, Gly245, and Gly247 each contribute to the L-glutamine site. The region spanning His197–Ser384 is the Glutamine amidotransferase type-1 domain. Catalysis depends on Cys273, which acts as the Nucleophile. L-glutamine contacts are provided by Leu274, Gln277, Asn315, and Phe318. Active-site residues include His357 and Glu359.

It belongs to the CarA family. In terms of assembly, composed of two chains; the small (or glutamine) chain promotes the hydrolysis of glutamine to ammonia, which is used by the large (or ammonia) chain to synthesize carbamoyl phosphate. Tetramer of heterodimers (alpha,beta)4.

The enzyme catalyses hydrogencarbonate + L-glutamine + 2 ATP + H2O = carbamoyl phosphate + L-glutamate + 2 ADP + phosphate + 2 H(+). It carries out the reaction L-glutamine + H2O = L-glutamate + NH4(+). Its pathway is amino-acid biosynthesis; L-arginine biosynthesis; carbamoyl phosphate from bicarbonate: step 1/1. The protein operates within pyrimidine metabolism; UMP biosynthesis via de novo pathway; (S)-dihydroorotate from bicarbonate: step 1/3. Small subunit of the glutamine-dependent carbamoyl phosphate synthetase (CPSase). CPSase catalyzes the formation of carbamoyl phosphate from the ammonia moiety of glutamine, carbonate, and phosphate donated by ATP, constituting the first step of 2 biosynthetic pathways, one leading to arginine and/or urea and the other to pyrimidine nucleotides. The small subunit (glutamine amidotransferase) binds and cleaves glutamine to supply the large subunit with the substrate ammonia. The sequence is that of Carbamoyl phosphate synthase small chain from Buchnera aphidicola subsp. Schizaphis graminum (strain Sg).